We begin with the raw amino-acid sequence, 529 residues long: MTLSPYLKEVAKRRTFAIISHPDAGKTTITEKVLLFGQAIQTAGTVKGRGSNQHAKSDWMEMEKQRGISITTSVMQFPYHDCLVNLLDTPGHEDFSEDTYRTLTAVDCCLMVIDAAKGVEDRTRKLMEVTRLRDTPILTFMNKLDRDIRDPMELLDEVENELKIGCAPITWPIGCGKLFKGVYHLYKDETYLYQSGKGHTIQEVRIVKGLNNPDLDAAVGEDLAQQLRDELELVKGASNEFDKELFLAGEITPVFFGTALGNFGVDHMLNGLVEWAPAPMPRQTDTRTVEASEDKFTGFVFKIQANMDPKHRDRVAFMRVVSGKYEKGMKLRQVRTAKDVVISDALTFMAGDRSHVEEAYPGDILGLHNHGTIQIGDTFTQGEMMKFTGIPNFAPELFRRIRLKDPLKQKQLLKGLVQLSEEGAVQVFRPISNNDLIVGAVGVLQFDVVVARLKSEYNVEAVYESVNVATARWVECADAKKFEEFKRKNESQLALDGGDNLAYIATSMVNLRLAQERYPDVQFHQTREH.

The tr-type G domain maps to 11–280 (AKRRTFAIIS…GLVEWAPAPM (270 aa)). Residues 20 to 27 (SHPDAGKT), 88 to 92 (DTPGH), and 142 to 145 (NKLD) each bind GTP.

The protein belongs to the TRAFAC class translation factor GTPase superfamily. Classic translation factor GTPase family. PrfC subfamily.

The protein resides in the cytoplasm. Increases the formation of ribosomal termination complexes and stimulates activities of RF-1 and RF-2. It binds guanine nucleotides and has strong preference for UGA stop codons. It may interact directly with the ribosome. The stimulation of RF-1 and RF-2 is significantly reduced by GTP and GDP, but not by GMP. The polypeptide is Peptide chain release factor 3 (Shigella flexneri).